Consider the following 147-residue polypeptide: Hemoglobin subunit epsilon (147 aa).

Positions 3–147 constitute a Globin domain; the sequence is HFTAEEKAAV…VAIALAHKYH (145 aa). Phosphoserine occurs at positions 14 and 51. Residues histidine 64 and histidine 93 each contribute to the heme b site.

It belongs to the globin family. As to quaternary structure, heterotetramer of two alpha chains and two epsilon chains in early embryonic hemoglobin Gower-2; two zeta chains and two epsilon chains in early embryonic hemoglobin Gower-1. As to expression, red blood cells.

In terms of biological role, the epsilon chain is a beta-type chain of early mammalian embryonic hemoglobin. The chain is Hemoglobin subunit epsilon (HBE1) from Symphalangus syndactylus (Siamang).